The primary structure comprises 869 residues: Programmed cell death 6-interacting protein (869 aa).

The residue at position 2 (Ala-2) is an N-acetylalanine. Residues Ser-3–Ala-392 form the BRO1 domain. Residues Thr-176–Val-503 form an interaction with CHMP4A, CHMP4B and CHMP4C region. Position 215 is an N6-acetyllysine (Lys-215). The interval Ala-383–Gln-869 is interaction with SDCBP. Thr-479 is modified (phosphothreonine). A Phosphoserine modification is found at Ser-481. Residues Val-503–Gln-869 are self-association. Disordered regions lie at residues Arg-715–Pro-808 and Tyr-838–Gln-869. The interval Pro-717 to Pro-720 is interaction with TSG101. Ser-730 is subject to Phosphoserine. Over residues Pro-739–Leu-763 the composition is skewed to pro residues. Thr-741 carries the phosphothreonine modification. Position 745 is an omega-N-methylarginine (Arg-745). Low complexity predominate over residues Pro-764–Pro-787. Composition is skewed to pro residues over residues Pro-788–Pro-808 and Ala-845–Pro-861. An interaction with CEP55 region spans residues Gln-798–Tyr-807.

In terms of assembly, self-associates. Interacts with SH3KBP1. Interacts with PDCD6 in a calcium-dependent manner. Interacts with TSG101 in a calcium-dependent manner; PDCD6IP homooligomerization may be required for TSG101-binding. Interacts with SGSM3. Directly interacts with CHMP4A, CHMP4B and CHMP4C. Directly interacts with CEP55 in a 1:2 stoechiometry; this interaction is required for PDCD6IP targeting to the midbody. May interact with PDGFRB. Interacts with SH3GL1 and SH3GL2/endophilin-1. Forms a complex with SDCBP and SDC2. Found in a complex with F-actin, TJP1/ZO-1 and PARD3. Interacts with CD2AP. Interacts with ARRDC1. Interacts (via BRO1 domain) with the ATG12-ATG3 conjugat; this interaction is bridged by ATG12 and promotes multiple PDCD6IP-mediated functions such as endolysosomal trafficking, macroautophagy and exosome biogenesis. May be phosphorylated on tyrosine residues by activated PDGFRB. Ubiquitously expressed. High expression in choroid plexus and low expression in cerebral cortex (at protein level).

The protein localises to the cytoplasm. The protein resides in the cytosol. Its subcellular location is the melanosome. It localises to the cytoskeleton. It is found in the microtubule organizing center. The protein localises to the centrosome. The protein resides in the secreted. Its subcellular location is the extracellular exosome. It localises to the cell junction. It is found in the tight junction. The protein localises to the midbody. The protein resides in the midbody ring. Multifunctional protein involved in endocytosis, multivesicular body biogenesis, membrane repair, cytokinesis, apoptosis and maintenance of tight junction integrity. Class E VPS protein involved in concentration and sorting of cargo proteins of the multivesicular body (MVB) for incorporation into intralumenal vesicles (ILVs) that are generated by invagination and scission from the limiting membrane of the endosome. Binds to the phospholipid lysobisphosphatidic acid (LBPA) which is abundant in MVBs internal membranes. The MVB pathway requires the sequential function of ESCRT-O, -I,-II and -III complexes. The ESCRT machinery also functions in topologically equivalent membrane fission events, such as the terminal stages of cytokinesis. Adapter for a subset of ESCRT-III proteins, such as CHMP4, to function at distinct membranes. Required for completion of cytokinesis. May play a role in the regulation of both apoptosis and cell proliferation. Regulates exosome biogenesis in concert with SDC1/4 and SDCBP. By interacting with F-actin, PARD3 and TJP1 secures the proper assembly and positioning of actomyosin-tight junction complex at the apical sides of adjacent epithelial cells that defines a spatial membrane domain essential for the maintenance of epithelial cell polarity and barrier. In Mus musculus (Mouse), this protein is Programmed cell death 6-interacting protein.